A 374-amino-acid chain; its full sequence is o-succinylbenzoate synthase (374 aa).

Lys-164 functions as the Proton donor in the catalytic mechanism. Residues Asp-189, Glu-214, and Asp-239 each coordinate Mg(2+). Lys-263 acts as the Proton acceptor in catalysis.

It belongs to the mandelate racemase/muconate lactonizing enzyme family. MenC type 2 subfamily. In terms of assembly, homodimer. It depends on a divalent metal cation as a cofactor.

The catalysed reaction is (1R,6R)-6-hydroxy-2-succinyl-cyclohexa-2,4-diene-1-carboxylate = 2-succinylbenzoate + H2O. It participates in quinol/quinone metabolism; 1,4-dihydroxy-2-naphthoate biosynthesis; 1,4-dihydroxy-2-naphthoate from chorismate: step 4/7. It functions in the pathway quinol/quinone metabolism; menaquinone biosynthesis. In terms of biological role, converts 2-succinyl-6-hydroxy-2,4-cyclohexadiene-1-carboxylate (SHCHC) to 2-succinylbenzoate (OSB). Also acts as a N-succinylamino acid racemase (NSAR) that catalyzes the racemization of N-succinyl-L-phenylglycine. L.innocua has the menaquinone synthesis pathway, indicating that the species requires OSBS activity. However, the NSAR/OSBS is not encoded in the menaquinone operon, raising the possibility that both NSAR and OSBS are biological functions. The chain is o-succinylbenzoate synthase from Listeria innocua serovar 6a (strain ATCC BAA-680 / CLIP 11262).